A 493-amino-acid chain; its full sequence is MSELTALTIAEARDKLKAKAITATELTDAYLSAIDAANDAINAYVAVTHDQARSMAKASDERIAKGEAGALEGIPLGVKDLFATKGVHTQACSHILDGFKPEYESTVTANLWADGAVMLGKLNMDEFAMGSSNETSYYGPVKNPWRAKGSNADLVPGGSSGGSAAAVAAHLCAGATATDTGGSIRQPAAFTGTVGIKPTYGRVSRWGTVAFASSLDQAGPIARDVRDAAILMKSMASLDLKDTTSVDLPVPDYEAALGRSVKGMKIGIPREYRVDGMPGEIEELWQKGIQYLKDAGAEIVDISLPHTKYALPAYYIVAPAEASSNLARYDGVRYGLRVPGKDIADMYEQTRAAGFGKEVKRRIMIGTYVLSAGYYDAYYLRAQKVRTLIKKDFEDVFAKGVDAILTPATPSAAFGLADEVLANDPVKMYLNDIFTVTVNMAGLPGIAVPGGLNGQGLPLGLQLIGRPFEEETLFQAAHVIEQAAGRFTPAKWW.

Residues Lys79 and Ser159 each act as charge relay system in the active site. Ser183 acts as the Acyl-ester intermediate in catalysis.

This sequence belongs to the amidase family. GatA subfamily. As to quaternary structure, heterotrimer of A, B and C subunits.

It carries out the reaction L-glutamyl-tRNA(Gln) + L-glutamine + ATP + H2O = L-glutaminyl-tRNA(Gln) + L-glutamate + ADP + phosphate + H(+). Functionally, allows the formation of correctly charged Gln-tRNA(Gln) through the transamidation of misacylated Glu-tRNA(Gln) in organisms which lack glutaminyl-tRNA synthetase. The reaction takes place in the presence of glutamine and ATP through an activated gamma-phospho-Glu-tRNA(Gln). The sequence is that of Glutamyl-tRNA(Gln) amidotransferase subunit A from Brucella suis biovar 1 (strain 1330).